A 434-amino-acid polypeptide reads, in one-letter code: UDP-N-acetylmuramoylalanine--D-glutamate ligase (434 aa).

117-123 provides a ligand contact to ATP; that stretch reads GTNGKST.

It belongs to the MurCDEF family.

Its subcellular location is the cytoplasm. It catalyses the reaction UDP-N-acetyl-alpha-D-muramoyl-L-alanine + D-glutamate + ATP = UDP-N-acetyl-alpha-D-muramoyl-L-alanyl-D-glutamate + ADP + phosphate + H(+). Its pathway is cell wall biogenesis; peptidoglycan biosynthesis. Its function is as follows. Cell wall formation. Catalyzes the addition of glutamate to the nucleotide precursor UDP-N-acetylmuramoyl-L-alanine (UMA). In Sphingopyxis alaskensis (strain DSM 13593 / LMG 18877 / RB2256) (Sphingomonas alaskensis), this protein is UDP-N-acetylmuramoylalanine--D-glutamate ligase.